The sequence spans 214 residues: Adenylate kinase (214 aa).

10–15 (GAGKGT) is a binding site for ATP. The NMP stretch occupies residues 30-59 (STGDMFRAAIKAGTELGKQAKALMDEGKLV). Residues Thr31, Arg36, 57–59 (KLV), 85–88 (GFPR), and Gln92 contribute to the AMP site. The tract at residues 122–159 (GRRVHQTSGRSYHIVYNPPKVEGKDDVTGEDLIIRADD) is LID. ATP contacts are provided by residues Arg123 and 132–133 (SY). AMP-binding residues include Arg156 and Arg167. Gln200 contacts ATP.

It belongs to the adenylate kinase family. Monomer.

Its subcellular location is the cytoplasm. It carries out the reaction AMP + ATP = 2 ADP. Its pathway is purine metabolism; AMP biosynthesis via salvage pathway; AMP from ADP: step 1/1. Functionally, catalyzes the reversible transfer of the terminal phosphate group between ATP and AMP. Plays an important role in cellular energy homeostasis and in adenine nucleotide metabolism. The sequence is that of Adenylate kinase from Haemophilus influenzae (strain PittEE).